Reading from the N-terminus, the 424-residue chain is Histidine--tRNA ligase (424 aa).

It belongs to the class-II aminoacyl-tRNA synthetase family. As to quaternary structure, homodimer.

It is found in the cytoplasm. It carries out the reaction tRNA(His) + L-histidine + ATP = L-histidyl-tRNA(His) + AMP + diphosphate + H(+). The protein is Histidine--tRNA ligase of Protochlamydia amoebophila (strain UWE25).